Here is a 332-residue protein sequence, read N- to C-terminus: Flotillin-like protein FloA (332 aa).

A run of 2 helical transmembrane segments spans residues 6–26 (LGYL…FSFV) and 28–48 (VGLW…YMIG).

Belongs to the flotillin-like FloA family. Homooligomerizes.

It is found in the cell membrane. Its subcellular location is the membrane raft. Found in functional membrane microdomains (FMM) that may be equivalent to eukaryotic membrane rafts. FMMs are highly dynamic and increase in number as cells age. Flotillins are thought to be important factors in membrane fluidity. The sequence is that of Flotillin-like protein FloA from Symbiobacterium thermophilum (strain DSM 24528 / JCM 14929 / IAM 14863 / T).